Reading from the N-terminus, the 108-residue chain is Nucleoid-associated protein mma_2329 (108 aa).

It belongs to the YbaB/EbfC family. In terms of assembly, homodimer.

It localises to the cytoplasm. The protein localises to the nucleoid. Binds to DNA and alters its conformation. May be involved in regulation of gene expression, nucleoid organization and DNA protection. The polypeptide is Nucleoid-associated protein mma_2329 (Janthinobacterium sp. (strain Marseille) (Minibacterium massiliensis)).